The chain runs to 292 residues: Putative xanthine dehydrogenase FAD-binding subunit XdhB (292 aa).

In terms of domain architecture, FAD-binding PCMH-type spans 1-176 (MFDFASYHRA…VAFHFPPQPK (176 aa)). Residues 27 to 34 (KLLAGGTD), 109 to 113 (ATYGG), Ile165, and Phe184 each bind FAD.

As to quaternary structure, heterotrimer of XdhA, XdhB and XdhC. FAD is required as a cofactor.

The enzyme catalyses xanthine + NAD(+) + H2O = urate + NADH + H(+). It carries out the reaction hypoxanthine + NAD(+) + H2O = xanthine + NADH + H(+). It functions in the pathway purine metabolism; hypoxanthine degradation; urate from hypoxanthine: step 1/2. The protein operates within purine metabolism; hypoxanthine degradation; urate from hypoxanthine: step 2/2. Presumed to be a dehydrogenase, but possibly an oxidase. Participates in limited purine salvage (requires aspartate) but does not support aerobic growth on purines as the sole carbon source (purine catabolism). The chain is Putative xanthine dehydrogenase FAD-binding subunit XdhB (xdhB) from Escherichia coli (strain K12).